A 169-amino-acid chain; its full sequence is Sorting nexin-24 (169 aa).

Met1 carries the N-acetylmethionine modification. A PX domain is found at 1–125; sequence MEVYIPSFRY…SFDETESEES (125 aa). A 1,2-diacyl-sn-glycero-3-phospho-(1D-myo-inositol-3-phosphate) contacts are provided by Arg38, Ser40, Lys61, and Arg74. Phosphoserine is present on residues Ser113 and Ser116.

It belongs to the sorting nexin family.

The protein resides in the cytoplasmic vesicle membrane. Functionally, may be involved in several stages of intracellular trafficking. In Homo sapiens (Human), this protein is Sorting nexin-24 (SNX24).